A 345-amino-acid polypeptide reads, in one-letter code: Nicotinate-nucleotide--dimethylbenzimidazole phosphoribosyltransferase (345 aa).

E312 (proton acceptor) is an active-site residue.

This sequence belongs to the CobT family.

It carries out the reaction 5,6-dimethylbenzimidazole + nicotinate beta-D-ribonucleotide = alpha-ribazole 5'-phosphate + nicotinate + H(+). Its pathway is nucleoside biosynthesis; alpha-ribazole biosynthesis; alpha-ribazole from 5,6-dimethylbenzimidazole: step 1/2. In terms of biological role, catalyzes the synthesis of alpha-ribazole-5'-phosphate from nicotinate mononucleotide (NAMN) and 5,6-dimethylbenzimidazole (DMB). The sequence is that of Nicotinate-nucleotide--dimethylbenzimidazole phosphoribosyltransferase from Phocaeicola vulgatus (strain ATCC 8482 / DSM 1447 / JCM 5826 / CCUG 4940 / NBRC 14291 / NCTC 11154) (Bacteroides vulgatus).